The chain runs to 287 residues: NADH-cytochrome b5 reductase 1 (287 aa).

Residues 5-25 (FEALVTALVLAVSFIFIYGKF) traverse the membrane as a helical segment. The FAD-binding FR-type domain maps to 41–145 (KDWQEFSLLT…RGPKGFYHYE (105 aa)). Residues 125–142 (AELA…KGFY) and 151–183 (EIGM…RVCL) contribute to the FAD site.

The protein belongs to the flavoprotein pyridine nucleotide cytochrome reductase family. Monomer. Component of the 2-(3-amino-3-carboxypropyl)histidine synthase complex composed of DPH1, DPH2, DPH3 and a NADH-dependent reductase, predominantly CBR1. FAD serves as cofactor.

It localises to the mitochondrion outer membrane. The enzyme catalyses 2 Fe(III)-[cytochrome b5] + NADH = 2 Fe(II)-[cytochrome b5] + NAD(+) + H(+). The catalysed reaction is 2 Fe(3+)-[Dph3] + NADH = 2 Fe(2+)-[Dph3] + NAD(+) + H(+). Its pathway is protein modification; peptidyl-diphthamide biosynthesis. Its function is as follows. NADH-dependent reductase for DPH3 and cytochrome b5. Required for the first step of diphthamide biosynthesis, a post-translational modification of histidine which occurs in elongation factor 2. DPH1 and DPH2 transfer a 3-amino-3-carboxypropyl (ACP) group from S-adenosyl-L-methionine (SAM) to a histidine residue, the reaction is assisted by a reduction system comprising DPH3 and a NADH-dependent reductase, predominantly CBR1. By reducing DPH3, also involved in the formation of the tRNA wobble base modification mcm5s 2U (5-methoxycarbonylmethyl-2-thiouridine), mediated by the elongator complex. The cytochrome b5/NADH cytochrome b5 reductase electron transfer system supports the catalytic activity of several sterol biosynthetic enzymes. The polypeptide is NADH-cytochrome b5 reductase 1 (CBR1) (Eremothecium gossypii (strain ATCC 10895 / CBS 109.51 / FGSC 9923 / NRRL Y-1056) (Yeast)).